The following is a 673-amino-acid chain: DNA ligase (673 aa).

Residues 33 to 37, 82 to 83, and Glu-113 contribute to the NAD(+) site; these read DYEYD and SL. Residue Lys-115 is the N6-AMP-lysine intermediate of the active site. The NAD(+) site is built by Arg-136, Glu-170, Lys-285, and Lys-309. Positions 403, 406, 421, and 426 each coordinate Zn(2+). Residues 583–672 form the BRCT domain; that stretch reads AKSDILKGYT…SHEEVEKILM (90 aa).

The protein belongs to the NAD-dependent DNA ligase family. LigA subfamily. Mg(2+) is required as a cofactor. The cofactor is Mn(2+).

It carries out the reaction NAD(+) + (deoxyribonucleotide)n-3'-hydroxyl + 5'-phospho-(deoxyribonucleotide)m = (deoxyribonucleotide)n+m + AMP + beta-nicotinamide D-nucleotide.. Functionally, DNA ligase that catalyzes the formation of phosphodiester linkages between 5'-phosphoryl and 3'-hydroxyl groups in double-stranded DNA using NAD as a coenzyme and as the energy source for the reaction. It is essential for DNA replication and repair of damaged DNA. This is DNA ligase from Caldicellulosiruptor saccharolyticus (strain ATCC 43494 / DSM 8903 / Tp8T 6331).